The sequence spans 575 residues: Phosphoenolpyruvate-protein phosphotransferase (575 aa).

Catalysis depends on His-191, which acts as the Tele-phosphohistidine intermediate. 2 residues coordinate phosphoenolpyruvate: Arg-298 and Arg-334. 2 residues coordinate Mg(2+): Glu-435 and Asp-459. Phosphoenolpyruvate contacts are provided by residues 458-459 (ND) and Arg-469. The active-site Proton donor is the Cys-506.

This sequence belongs to the PEP-utilizing enzyme family. In terms of assembly, homodimer. Requires Mg(2+) as cofactor.

The protein resides in the cytoplasm. The enzyme catalyses L-histidyl-[protein] + phosphoenolpyruvate = N(pros)-phospho-L-histidyl-[protein] + pyruvate. General (non sugar-specific) component of the phosphoenolpyruvate-dependent sugar phosphotransferase system (sugar PTS). This major carbohydrate active-transport system catalyzes the phosphorylation of incoming sugar substrates concomitantly with their translocation across the cell membrane. Enzyme I transfers the phosphoryl group from phosphoenolpyruvate (PEP) to the phosphoryl carrier protein (HPr). This is Phosphoenolpyruvate-protein phosphotransferase (ptsI) from Enterococcus faecalis (strain ATCC 700802 / V583).